A 403-amino-acid chain; its full sequence is FAD-dependent monooxygenase tazP (403 aa).

FAD contacts are provided by Gly75, Arg144, Asp354, and Ala367.

Belongs to the paxM FAD-dependent monooxygenase family. FAD serves as cofactor.

The protein operates within secondary metabolite biosynthesis. Its function is as follows. FAD-dependent monooxygenase; part of the gene cluster that mediates the biosynthesis of azaterrilone A and other azaphilones, a class of fungal metabolites characterized by a highly oxygenated pyrano-quinone bicyclic core and exhibiting a broad range of bioactivities. The first step of the pathway begins with the non-reducing polyketide synthase tazA that assembles one acetyl-CoA starter unit, five malonyl-CoA units, and catalyzes a series of Claisen condensations, methylation, PT-mediated cyclization, and finally releases the first hexaketide precursor through the R-domain. The tazA product then undergoes reduction on its terminal ketone and the following pyran-ring formation by yet undetermined enzyme(s). Dehydration and enoyl reduction, possibly involving the trans-enoyl reductase tazE leads to the next intermediate. TazD is predicted as an acetyltransferase and might catalyze the acetylation steps leading to the synthesis of azaterrilone A. Azaterrilone A is not the final product of the taz pathway and both the highly reducing polyketide synthase tazB and the dual enzyme tazHJ catalyze late steps of the pathway, leading to the production of the 2 final stereoisomers that contain additional polyketide modification whose structures have still to be determined. In Aspergillus terreus (strain NIH 2624 / FGSC A1156), this protein is FAD-dependent monooxygenase tazP.